Consider the following 342-residue polypeptide: Heat-inducible transcription repressor HrcA (342 aa).

The protein belongs to the HrcA family.

Functionally, negative regulator of class I heat shock genes (grpE-dnaK-dnaJ and groELS operons). Prevents heat-shock induction of these operons. The polypeptide is Heat-inducible transcription repressor HrcA (Leptospira interrogans serogroup Icterohaemorrhagiae serovar copenhageni (strain Fiocruz L1-130)).